A 665-amino-acid polypeptide reads, in one-letter code: MSMDSVISSRSGADYRSFRQITRDRLLFEMLRSTKKSSKSAWKVLIMDKLTVKIMSFSCKMADVMEEGVSLVEDLYMRRQPLPLMDAIYFIQPTKENIRIFMSDMSGKIPLYKKAYVFFSSPVQRELVAQIKKDSNVRARIGALSEMNLEYFAIDSQGFTTDHDKALEELFSENAEGSLKYNSCLNMMATRIATVFASMREFPRVHYRVARTIDASTLTTLRDLAPTKLAAGVWNCLARFKAMIPEFPQTETCELLIVDRSIDQIAPIIHEWTYDAMCHDLLCMDGNKYVQQVPSKSGSGTENKEVLLEDHDPIWLELRHVHIANASERLHEKMTNFVSKNKAAQLHQARNGGDLSTKELQKMVQALPQYSDQIDKLALHVEIAGKLNSTIKEQQLKDVGQLEQDLVFGDAGTKELINFFRTHLDISRENKLRLLMVYAAINPDKTRSDKGAKLMQLAGLSADDMIAVSNMRCLCGHDSKKSSAGGFTLKFDLRKKRHGIRKERIGEESKWMLSRFYPILEELIEKLSKGELPKDEYHYLNDPSPSFRGIPSASTQTSPAHQPAQSMRSRRTGGTWARPRDSDDGYSSDSVLKHTSSNSRKLGQRLFVFVIGGATRSELCAAHKLSSKLKREIILGSSSLDDPPQFITKLKMLSTDDLTLDDLQI.

Positions 543–594 are disordered; it reads PSPSFRGIPSASTQTSPAHQPAQSMRSRRTGGTWARPRDSDDGYSSDSVLKH. Polar residues-rich tracts occupy residues 552-567 and 585-594; these read SASTQTSPAHQPAQSM and GYSSDSVLKH.

Belongs to the STXBP/unc-18/SEC1 family.

Functionally, involved in the vesicle trafficking. Binds syntaxins. The protein is Probable protein transport Sec1a of Oryza sativa subsp. japonica (Rice).